The primary structure comprises 537 residues: Quadr-hydrophobin (537 aa).

Positions 1–17 are cleaved as a signal peptide; it reads MKFITVAAALFASTSLA. Hydrophobin stretches follow at residues 63-199, 200-299, 300-421, and 422-537; these read GGNP…QNPI, GGNP…ENPT, GGNP…QDPL, and GGNP…RAII. 2 N-linked (GlcNAc...) asparagine glycosylation sites follow: Asn70 and Asn113. Intrachain disulfides connect Cys134-Cys183, Cys144-Cys174, Cys145-Cys157, Cys184-Cys195, Cys234-Cys283, Cys244-Cys274, Cys245-Cys257, Cys284-Cys295, Cys356-Cys405, Cys366-Cys396, Cys367-Cys379, Cys406-Cys417, Cys471-Cys520, Cys481-Cys511, Cys482-Cys494, and Cys521-Cys532.

Belongs to the cerato-ulmin hydrophobin family. In terms of assembly, homotetramer. Further self-assembles to form highly ordered films at water-air interfaces through intermolecular interactions.

The protein resides in the secreted. The protein localises to the cell wall. Functionally, aerial growth, conidiation, and dispersal of filamentous fungi in the environment rely upon a capability of their secreting small amphipathic proteins called hydrophobins (HPBs) with low sequence identity. Class I can self-assemble into an outermost layer of rodlet bundles on aerial cell surfaces, conferring cellular hydrophobicity that supports fungal growth, development and dispersal; whereas Class II form highly ordered films at water-air interfaces through intermolecular interactions but contribute nothing to the rodlet structure. The sequence is that of Quadr-hydrophobin from Cordyceps militaris (Caterpillar fungus).